The primary structure comprises 114 residues: MQFTKMSAFATLALATLAAATPTRRNDSPSNQCNTGSLQCCNSLQSANSASLAGLLGLLGVVVGTITGQVGVTCSPITGVGVSGTSCSEQPVCCTNNAFNGVIALGCSPININL.

A signal peptide spans 1–20 (MQFTKMSAFATLALATLAAA). 4 disulfide bridges follow: C33-C93, C40-C87, C41-C74, and C94-C107.

It belongs to the fungal hydrophobin family. As to quaternary structure, self-assembles to form functional amyloid fibrils called rodlets. Self-assembly into fibrillar rodlets occurs spontaneously at hydrophobic:hydrophilic interfaces and the rodlets further associate laterally to form amphipathic monolayers.

The protein localises to the secreted. The protein resides in the cell wall. Functionally, aerial growth, conidiation, and dispersal of filamentous fungi in the environment rely upon a capability of their secreting small amphipathic proteins called hydrophobins (HPBs) with low sequence identity. Class I can self-assemble into an outermost layer of rodlet bundles on aerial cell surfaces, conferring cellular hydrophobicity that supports fungal growth, development and dispersal; whereas Class II form highly ordered films at water-air interfaces through intermolecular interactions but contribute nothing to the rodlet structure. Pnh1 is a class I hydrophobin that might be involved in the attachment of the hydrophilic wall of hyphae to the hydrophobic surface of wood under inorganic phosphate (Pi)-deficient conditions and enable the mycelium to degrade efficiently the components of wood and to acquire nutrients containing Pi. This Pholiota nameko protein is Class I hydrophobin 1.